The following is a 298-amino-acid chain: Protoheme IX farnesyltransferase (298 aa).

The next 9 membrane-spanning stretches (helical) occupy residues Leu-29–Leu-49, Phe-51–Leu-71, Glu-97–Ile-117, Leu-120–Leu-140, Ile-148–Gly-168, Leu-175–Tyr-195, Ile-221–Ser-241, Gly-243–Leu-263, and Tyr-278–Leu-298.

The protein belongs to the UbiA prenyltransferase family. Protoheme IX farnesyltransferase subfamily.

The protein localises to the cell inner membrane. It carries out the reaction heme b + (2E,6E)-farnesyl diphosphate + H2O = Fe(II)-heme o + diphosphate. Its pathway is porphyrin-containing compound metabolism; heme O biosynthesis; heme O from protoheme: step 1/1. Functionally, converts heme B (protoheme IX) to heme O by substitution of the vinyl group on carbon 2 of heme B porphyrin ring with a hydroxyethyl farnesyl side group. This chain is Protoheme IX farnesyltransferase, found in Dechloromonas aromatica (strain RCB).